Here is a 398-residue protein sequence, read N- to C-terminus: Immunoglobulin heavy constant alpha 1 (398 aa).

Over 1–364 (ASPTSPKVFP…TPGANLWPTT (364 aa)) the chain is Extracellular. In terms of domain architecture, Ig-like 1 spans 6-98 (PKVFPLSLCS…HYTNPSQDVT (93 aa)). Disulfide bonds link Cys-26/Cys-85 and Cys-77/Cys-101. Residues 96–122 (DVTVPCPVPSTPPTPSPSTPPTPSPSC) form a disordered region. Residues 101–119 (CPVPSTPPTPSPSTPPTPS) show a composition bias toward pro residues. Residue Ser-105 is glycosylated (O-linked (GalNAc...) serine). O-linked (GalNAc...) threonine glycosylation is found at Thr-106 and Thr-109. O-linked (GalNAc...) serine glycosylation is found at Ser-111 and Ser-113. 2 O-linked (GalNAc...) threonine glycosylation sites follow: Thr-114 and Thr-117. 2 O-linked (GalNAc...) serine glycosylation sites follow: Ser-119 and Ser-121. 3 disulfide bridges follow: Cys-123-Cys-180, Cys-147-Cys-204, and Cys-250-Cys-313. 2 consecutive Ig-like domains span residues 125–220 (PRLS…ATLS) and 228–330 (PEVH…KTID). A glycan (N-linked (GlcNAc...) (complex) asparagine) is linked at Asn-144. The N-linked (GlcNAc...) (complex) asparagine glycan is linked to Pro-340. Glu-352 contacts 3-hydroxy-L-kynurenine. Residues 365–383 (ITFLTLFLLSLFYSTALTV) form a helical membrane-spanning segment. Topologically, residues 384 to 398 (TSVRGPSGNREGPQY) are cytoplasmic.

In terms of assembly, immunoglobulins are composed of two identical heavy chains and two identical light chains; disulfide-linked. Monomeric or polymeric. Part of the secretory IgA (sIgA) complex that consists of two, four or five IgA monomers, and two additional non-Ig polypeptides, namely the JCHAIN and the secretory component (the proteolytic product of PIGR). In terms of processing, 3-Hydroxykynurenine, an oxidized tryptophan metabolite that is common in biological fluids, reacts with alpha-1-microglobulin to form heterogeneous polycyclic chromophores including hydroxanthommatin. The chromophore reacts with accessible cysteines forming non-reducible thioether cross-links with Ig alpha-1 chain C region Cys-352. N- and O-glycosylated. N-glycan at Asn-144: Hex5HexNAc4.

It is found in the secreted. The protein resides in the cell membrane. Functionally, constant region of immunoglobulin heavy chains. Immunoglobulins, also known as antibodies, are membrane-bound or secreted glycoproteins produced by B lymphocytes. In the recognition phase of humoral immunity, the membrane-bound immunoglobulins serve as receptors which, upon binding of a specific antigen, trigger the clonal expansion and differentiation of B lymphocytes into immunoglobulins-secreting plasma cells. Secreted immunoglobulins mediate the effector phase of humoral immunity, which results in the elimination of bound antigens. The antigen binding site is formed by the variable domain of one heavy chain, together with that of its associated light chain. Thus, each immunoglobulin has two antigen binding sites with remarkable affinity for a particular antigen. The variable domains are assembled by a process called V-(D)-J rearrangement and can then be subjected to somatic hypermutations which, after exposure to antigen and selection, allow affinity maturation for a particular antigen. Ig alpha is the major immunoglobulin class in body secretions. This Homo sapiens (Human) protein is Immunoglobulin heavy constant alpha 1.